Reading from the N-terminus, the 240-residue chain is Small ribosomal subunit protein uS2c (240 aa).

Belongs to the universal ribosomal protein uS2 family.

It localises to the plastid. It is found in the chloroplast. The polypeptide is Small ribosomal subunit protein uS2c (rps2) (Euglena gracilis).